The primary structure comprises 676 residues: DNA-directed RNA polymerase subunit beta' (676 aa).

Zn(2+) contacts are provided by Cys69, Cys71, Cys87, and Cys90. Mg(2+) is bound by residues Asp485, Asp487, and Asp489.

It belongs to the RNA polymerase beta' chain family. RpoC1 subfamily. In terms of assembly, in plastids the minimal PEP RNA polymerase catalytic core is composed of four subunits: alpha, beta, beta', and beta''. When a (nuclear-encoded) sigma factor is associated with the core the holoenzyme is formed, which can initiate transcription. It depends on Mg(2+) as a cofactor. The cofactor is Zn(2+).

It is found in the plastid. The protein resides in the chloroplast. It carries out the reaction RNA(n) + a ribonucleoside 5'-triphosphate = RNA(n+1) + diphosphate. In terms of biological role, DNA-dependent RNA polymerase catalyzes the transcription of DNA into RNA using the four ribonucleoside triphosphates as substrates. The chain is DNA-directed RNA polymerase subunit beta' from Fagopyrum esculentum subsp. ancestrale (Wild buckwheat).